A 108-amino-acid chain; its full sequence is Heme-degrading monooxygenase HmoA (108 aa).

The region spanning 2-95 is the ABM domain; the sequence is FVQLRKMTVK…DYLISTEVSM (94 aa). Residue H76 participates in heme binding.

This sequence belongs to the antibiotic biosynthesis monooxygenase family. Homodimer.

Its subcellular location is the cytoplasm. The enzyme catalyses heme b + 3 reduced [NADPH--hemoprotein reductase] + 3 O2 = biliverdin IXalpha + CO + Fe(2+) + 3 oxidized [NADPH--hemoprotein reductase] + 3 H2O + H(+). In terms of biological role, allows bacterial pathogens to use the host heme as an iron source. Catalyzes the oxidative degradation of the heme macrocyclic porphyrin ring in the presence of a suitable electron donor such as ascorbate or NADPH--cytochrome P450 reductase, with subsequent release of free iron. In Bacillus subtilis (strain 168), this protein is Heme-degrading monooxygenase HmoA (hmoA).